The following is a 574-amino-acid chain: Septation ring formation regulator EzrA (574 aa).

Residues 1–7 (MSSGIIL) are Extracellular-facing. A helical transmembrane segment spans residues 8 to 26 (LIVAIVLLVIIAYLVGVII). Over 27-574 (RKRNDTLITS…YEKTRERIRF (548 aa)) the chain is Cytoplasmic. Coiled-coil stretches lie at residues 102–131 (NFIR…REAL), 161–190 (ENED…FVAL), 276–379 (VTLD…QQEK), and 459–493 (QLEA…NLEE).

It belongs to the EzrA family.

It is found in the cell membrane. In terms of biological role, negative regulator of FtsZ ring formation; modulates the frequency and position of FtsZ ring formation. Inhibits FtsZ ring formation at polar sites. Interacts either with FtsZ or with one of its binding partners to promote depolymerization. The sequence is that of Septation ring formation regulator EzrA from Streptococcus equi subsp. zooepidemicus (strain H70).